The primary structure comprises 246 residues: Complement C1q tumor necrosis factor-related protein 3 (246 aa).

Positions 1 to 22 (MLGRQRIWWHLLPLLFLPFCLC) are cleaved as a signal peptide. The Collagen-like domain occupies 51 to 113 (GYQGPPGPPG…KGEKGYPGVP (63 aa)). Residues 53-112 (QGPPGPPGPPGIPGNHGNNGNNGATGHEGAKGEKGDKGDLGPRGERGQHGPKGEKGYPGV) form a disordered region. Residues 55 to 64 (PPGPPGPPGI) are compositionally biased toward pro residues. Positions 65–74 (PGNHGNNGNN) are enriched in low complexity. Basic and acidic residues predominate over residues 80-107 (EGAKGEKGDKGDLGPRGERGQHGPKGEK). The region spanning 113-246 (PPELQIAFMA…FAGFLLFETK (134 aa)) is the C1q domain.

The protein resides in the secreted. This Mus musculus (Mouse) protein is Complement C1q tumor necrosis factor-related protein 3 (C1qtnf3).